The sequence spans 199 residues: Casparian strip membrane protein 1 (199 aa).

Residues 1–37 (MKSESAAIDIPESSSVAKGKAPLIAVSRNEKGGYRKG) are Cytoplasmic-facing. Residues 38–58 (IAIFDFILRLAAIATALAAAA) traverse the membrane as a helical segment. The Extracellular segment spans residues 59–87 (AMGTSDETLPFFTQFFQFQASYDDLPTFQ). Residues 88–108 (FFVIAIAIVGGYLVLSLPFSI) traverse the membrane as a helical segment. At 109-120 (VAIVRPHAVGPR) the chain is on the cytoplasmic side. The helical transmembrane segment at 121-141 (LLLIILDAVALTLNTAAGAAA) threads the bilayer. The Extracellular segment spans residues 142-173 (AAIVYLAHNGNSNTNWLAICQQYGDFCQKVSG). The helical transmembrane segment at 174 to 194 (AVVASFITVVIFVFLIVLSAF) threads the bilayer. At 195–199 (ALRRH) the chain is on the cytoplasmic side.

Belongs to the Casparian strip membrane proteins (CASP) family. In terms of assembly, homodimer and heterodimers.

It localises to the cell membrane. Its function is as follows. Regulates membrane-cell wall junctions and localized cell wall deposition. Required for establishment of the Casparian strip membrane domain (CSD) and the subsequent formation of Casparian strips, a cell wall modification of the root endodermis that determines an apoplastic barrier between the intraorganismal apoplasm and the extraorganismal apoplasm and prevents lateral diffusion. In Populus trichocarpa (Western balsam poplar), this protein is Casparian strip membrane protein 1.